The sequence spans 53 residues: Large ribosomal subunit protein uL30 (53 aa).

This sequence belongs to the universal ribosomal protein uL30 family. In terms of assembly, part of the 50S ribosomal subunit.

The protein is Large ribosomal subunit protein uL30 of Deinococcus geothermalis (strain DSM 11300 / CIP 105573 / AG-3a).